The sequence spans 515 residues: Cytochrome P450 2D7 (515 aa).

Residues 1–2 (MG) lie on the Extracellular side of the membrane. The helical transmembrane segment at 3–23 (LEALVPLAMIVAIFLLLVDLM) threads the bilayer. The Cytoplasmic segment spans residues 24–301 (HRHQRWAARY…DENLRIVVGN (278 aa)). Residues 302–322 (LFLAGMVTTSTTLAWGLLLMI) form a helical membrane-spanning segment. Residues 323–515 (LHLDVQRGRR…SPYELCAVPR (193 aa)) are Extracellular-facing. Asn-416 carries an N-linked (GlcNAc...) asparagine glycan. A heme-binding site is contributed by Cys-461.

It belongs to the cytochrome P450 family. Heme is required as a cofactor. In terms of tissue distribution, expressed in brain cortex (at protein level).

The protein localises to the membrane. Its subcellular location is the cytoplasm. It localises to the mitochondrion. It catalyses the reaction an organic molecule + reduced [NADPH--hemoprotein reductase] + O2 = an alcohol + oxidized [NADPH--hemoprotein reductase] + H2O + H(+). Its function is as follows. May be responsible for the metabolism of many drugs and environmental chemicals that it oxidizes. It may be involved in the metabolism of codeine to morphine. However, another study could not confirm it. The sequence is that of Cytochrome P450 2D7 from Homo sapiens (Human).